Reading from the N-terminus, the 395-residue chain is Trans-2-enoyl-CoA reductase [NADH] (395 aa).

NAD(+) is bound by residues 47–52 (GASTGY), 73–74 (FE), 110–111 (DA), and 138–139 (LA). A substrate-binding site is contributed by Y224. The active-site Proton donor is the Y234. Residues K243 and 272–274 (VVT) each bind NAD(+).

It belongs to the TER reductase family. As to quaternary structure, monomer.

The catalysed reaction is a 2,3-saturated acyl-CoA + NAD(+) = a (2E)-enoyl-CoA + NADH + H(+). It functions in the pathway lipid metabolism; fatty acid biosynthesis. Functionally, involved in the fatty acid synthesis (FAS II). Catalyzes the reduction of a carbon-carbon double bond in an enoyl moiety that is covalently linked to a coenzyme A (CoA). The protein is Trans-2-enoyl-CoA reductase [NADH] of Ruminiclostridium cellulolyticum (strain ATCC 35319 / DSM 5812 / JCM 6584 / H10) (Clostridium cellulolyticum).